We begin with the raw amino-acid sequence, 151 residues long: Putative pre-16S rRNA nuclease (151 aa).

This sequence belongs to the YqgF nuclease family.

Its subcellular location is the cytoplasm. Its function is as follows. Could be a nuclease involved in processing of the 5'-end of pre-16S rRNA. This Myxococcus xanthus (strain DK1622) protein is Putative pre-16S rRNA nuclease.